The primary structure comprises 436 residues: Kynureninase (436 aa).

Pyridoxal 5'-phosphate contacts are provided by residues L88, T89, 116–119, D202, H205, and Y227; that span reads FPSD. K228 carries the post-translational modification N6-(pyridoxal phosphate)lysine. Residues W280 and N308 each contribute to the pyridoxal 5'-phosphate site.

This sequence belongs to the kynureninase family. Homodimer. Pyridoxal 5'-phosphate is required as a cofactor.

It is found in the cytoplasm. The catalysed reaction is L-kynurenine + H2O = anthranilate + L-alanine + H(+). It catalyses the reaction 3-hydroxy-L-kynurenine + H2O = 3-hydroxyanthranilate + L-alanine + H(+). It participates in amino-acid degradation; L-kynurenine degradation; L-alanine and anthranilate from L-kynurenine: step 1/1. It functions in the pathway cofactor biosynthesis; NAD(+) biosynthesis; quinolinate from L-kynurenine: step 2/3. In terms of biological role, catalyzes the cleavage of L-kynurenine (L-Kyn) and L-3-hydroxykynurenine (L-3OHKyn) into anthranilic acid (AA) and 3-hydroxyanthranilic acid (3-OHAA), respectively. The polypeptide is Kynureninase (Schistosoma japonicum (Blood fluke)).